A 113-amino-acid polypeptide reads, in one-letter code: Large ribosomal subunit protein uL24 (113 aa).

The protein belongs to the universal ribosomal protein uL24 family. In terms of assembly, part of the 50S ribosomal subunit.

In terms of biological role, one of two assembly initiator proteins, it binds directly to the 5'-end of the 23S rRNA, where it nucleates assembly of the 50S subunit. Its function is as follows. One of the proteins that surrounds the polypeptide exit tunnel on the outside of the subunit. The sequence is that of Large ribosomal subunit protein uL24 from Rickettsia prowazekii (strain Madrid E).